We begin with the raw amino-acid sequence, 265 residues long: UPF0294 protein KPK_4510 (265 aa).

It belongs to the UPF0294 family.

The protein resides in the cytoplasm. The chain is UPF0294 protein KPK_4510 from Klebsiella pneumoniae (strain 342).